The primary structure comprises 201 residues: 3-isopropylmalate dehydratase small subunit (201 aa).

It belongs to the LeuD family. LeuD type 1 subfamily. As to quaternary structure, heterodimer of LeuC and LeuD.

The enzyme catalyses (2R,3S)-3-isopropylmalate = (2S)-2-isopropylmalate. It functions in the pathway amino-acid biosynthesis; L-leucine biosynthesis; L-leucine from 3-methyl-2-oxobutanoate: step 2/4. Catalyzes the isomerization between 2-isopropylmalate and 3-isopropylmalate, via the formation of 2-isopropylmaleate. The protein is 3-isopropylmalate dehydratase small subunit of Roseobacter denitrificans (strain ATCC 33942 / OCh 114) (Erythrobacter sp. (strain OCh 114)).